The sequence spans 624 residues: Glutaminase 2 (624 aa).

A disordered region spans residues 1-20 (MDTQPIRLPSVAGATRSAGY). The interval 43 to 325 (GELADYIPEL…LSARFDLHML (283 aa)) is glutaminase. S85, N134, E178, N185, Y209, Y261, and V279 together coordinate substrate. In terms of domain architecture, STAS spans 355–466 (QQILDERHSD…ALLDDAIEWA (112 aa)). An a nucleoside 3',5'-cyclic phosphate-binding site is contributed by 491–608 (LLAELDTDEI…IMRNLAAILA (118 aa)).

Belongs to the glutaminase family. Homotetramer.

It catalyses the reaction L-glutamine + H2O = L-glutamate + NH4(+). The sequence is that of Glutaminase 2 (glsA2) from Bradyrhizobium diazoefficiens (strain JCM 10833 / BCRC 13528 / IAM 13628 / NBRC 14792 / USDA 110).